The sequence spans 648 residues: Transcription initiation factor TFIID subunit 5 (648 aa).

Over residues 1–13 (MDSENSSSHSISS) the composition is skewed to low complexity. Positions 1–21 (MDSENSSSHSISSPQMFQNTH) are disordered. Residues 35 to 67 (MNNESLQMIIGYLRRNGLTETEELLTREAGPVL) form the LisH domain. 6 WD repeats span residues 317-358 (NAPI…KKLR), 392-431 (GHGG…NAVI), 433-472 (RTPA…PLRI), 475-514 (DPYG…RVRI), 517-556 (GHKA…LVAA), and 560-599 (EQAG…GTVL).

It belongs to the WD repeat TAF5 family. In terms of assembly, component of the TFIID basal transcription factor complex, composed of TATA-box-binding protein tbp-1, and a number of TBP-associated factors (TAFs).

The protein resides in the nucleus. Its function is as follows. The TFIID basal transcription factor complex plays a major role in the initiation of RNA polymerase II (Pol II)-dependent transcription. TFIID recognizes and binds promoters via its subunit tbp-1, a TATA-box-binding protein, and promotes assembly of the pre-initiation complex (PIC). The TFIID complex consists of tbp-1 and TBP-associated factors (TAFs), including taf-5. Essential for early embryonic development, but not required for transcription of some genes; probably acts via activating transcription initiation by RNA Pol II, as part of the TFIID complex. In Caenorhabditis elegans, this protein is Transcription initiation factor TFIID subunit 5.